The primary structure comprises 205 residues: tRNA (pseudouridine(54)-N(1))-methyltransferase (205 aa).

S-adenosyl-L-methionine is bound by residues leucine 136, glycine 156, 179–184, and cysteine 189; that span reads LSPLEL.

This sequence belongs to the methyltransferase superfamily. TrmY family. Homodimer.

It localises to the cytoplasm. The enzyme catalyses pseudouridine(54) in tRNA + S-adenosyl-L-methionine = N(1)-methylpseudouridine(54) in tRNA + S-adenosyl-L-homocysteine + H(+). Its function is as follows. Specifically catalyzes the N1-methylation of pseudouridine at position 54 (Psi54) in tRNAs. This is tRNA (pseudouridine(54)-N(1))-methyltransferase from Methanocaldococcus jannaschii (strain ATCC 43067 / DSM 2661 / JAL-1 / JCM 10045 / NBRC 100440) (Methanococcus jannaschii).